Here is a 390-residue protein sequence, read N- to C-terminus: MLKVKNFLGSRLKSFPTRKGKSDKECCRSLTSKLSVNEEYKEAFRTNSYLETRTKAEDQLGITSCSKLSSSSPSPSSSSDLSFHSHFTDYLLDPPQETLDALMQDSSLDNLIVTFFDLSSEACDVCETLLQCLQQIKINHNKIKRVMKIGKRVCNGAKTLECSPEMLCALIFQELSRFAALKNPLCRIVNEAQFRIVHDANSDLLTKLTSKKRRIRRKIRFFKFCKKLGGYSLVITHSAIVITLLIIALHSILGVFAAPALLGLCSFCLLRKKKAKGRMHKSNKDTTLEKLGTQIDIAAKGMFILINDLDTLSRLAGRLCDEIEHRKTVAAMCAKSRKIEVLKEALREFNGHEEKFSDQLQELEEHLYLCFHTINRSRRLVLAQITGQSS.

The next 2 membrane-spanning stretches (helical) occupy residues 228 to 248 (LGGY…LIIA) and 250 to 270 (HSIL…FCLL).

It belongs to the UPF0496 family.

The protein localises to the membrane. This chain is UPF0496 protein At1g20180, found in Arabidopsis thaliana (Mouse-ear cress).